The sequence spans 184 residues: Photosystem I assembly protein Ycf4 (184 aa).

A run of 2 helical transmembrane segments spans residues 24–44 (WAFI…SSYI) and 57–77 (IIFF…LFIS).

This sequence belongs to the Ycf4 family.

The protein resides in the plastid. The protein localises to the chloroplast thylakoid membrane. In terms of biological role, seems to be required for the assembly of the photosystem I complex. The sequence is that of Photosystem I assembly protein Ycf4 from Buxus microphylla (Littleleaf boxwood).